Reading from the N-terminus, the 281-residue chain is Glutamate racemase (281 aa).

Residues 13 to 14 and 45 to 46 contribute to the substrate site; these read DS and YG. C76 functions as the Proton donor/acceptor in the catalytic mechanism. Position 77–78 (77–78) interacts with substrate; sequence NT. The active-site Proton donor/acceptor is C185. Substrate is bound at residue 186-187; the sequence is TH.

Belongs to the aspartate/glutamate racemases family.

It carries out the reaction L-glutamate = D-glutamate. Its pathway is cell wall biogenesis; peptidoglycan biosynthesis. Its function is as follows. Provides the (R)-glutamate required for cell wall biosynthesis. The polypeptide is Glutamate racemase (Rippkaea orientalis (strain PCC 8801 / RF-1) (Cyanothece sp. (strain PCC 8801))).